Here is a 496-residue protein sequence, read N- to C-terminus: Cobyric acid synthase (496 aa).

The 191-residue stretch at 257–447 (KINVAIILLK…MHGILDNPAV (191 aa)) folds into the GATase cobBQ-type domain. Catalysis depends on cysteine 338, which acts as the Nucleophile. The active site involves histidine 439.

This sequence belongs to the CobB/CobQ family. CobQ subfamily.

It functions in the pathway cofactor biosynthesis; adenosylcobalamin biosynthesis. Its function is as follows. Catalyzes amidations at positions B, D, E, and G on adenosylcobyrinic A,C-diamide. NH(2) groups are provided by glutamine, and one molecule of ATP is hydrogenolyzed for each amidation. The protein is Cobyric acid synthase of Parabacteroides distasonis (strain ATCC 8503 / DSM 20701 / CIP 104284 / JCM 5825 / NCTC 11152).